The primary structure comprises 553 residues: 3-amino-2-hydroxy-4-methoxybenzoate diazotase (553 aa).

Positions 157–167 (ALPAAGATGPA) are enriched in low complexity. A disordered region spans residues 157–178 (ALPAAGATGPAREGDAPPPAPV).

Belongs to the ATP-dependent AMP-binding enzyme family.

The enzyme catalyses 3-amino-2-hydroxy-4-methoxybenzoate + nitrite + ATP = cremeomycin + AMP + diphosphate + H2O. It functions in the pathway antibiotic biosynthesis. Functionally, part of a gene cluster involved in the biosynthesis of cremeomycin, a light-sensitive o-diazoquinone with antibacterial and antiproliferative effects. Catalyzes the last step of cremeomycin biosynthesis, the diazotization of 3-amino-2-hydroxy-4-methoxybenzoate (3,2,4-AHMBA) with nitrite to generate cremeomycin. This Streptomyces cremeus protein is 3-amino-2-hydroxy-4-methoxybenzoate diazotase.